The primary structure comprises 154 residues: Small heat shock protein IbpB (154 aa).

Residues 26–137 form the sHSP domain; it reads GQEPQGFPPY…QPQRIAIGSA (112 aa).

The protein belongs to the small heat shock protein (HSP20) family. In terms of assembly, homodimer. Forms homomultimers of about 100-150 subunits at optimal growth temperatures. Conformation changes to oligomers at high temperatures or high ionic concentrations. The decrease in size of the multimers is accompanied by an increase in chaperone activity.

Its subcellular location is the cytoplasm. Functionally, associates with aggregated proteins, together with IbpA, to stabilize and protect them from irreversible denaturation and extensive proteolysis during heat shock and oxidative stress. Aggregated proteins bound to the IbpAB complex are more efficiently refolded and reactivated by the ATP-dependent chaperone systems ClpB and DnaK/DnaJ/GrpE. Its activity is ATP-independent. The sequence is that of Small heat shock protein IbpB from Yersinia pseudotuberculosis serotype O:1b (strain IP 31758).